Here is a 200-residue protein sequence, read N- to C-terminus: Holliday junction resolvase RecU (200 aa).

Residues 1-25 (MTIRYPNGKRYNQASQPHKTPIKKH) are disordered. Mg(2+) contacts are provided by T85, D87, E100, and Q119.

Belongs to the RecU family. It depends on Mg(2+) as a cofactor.

The protein localises to the cytoplasm. It catalyses the reaction Endonucleolytic cleavage at a junction such as a reciprocal single-stranded crossover between two homologous DNA duplexes (Holliday junction).. Endonuclease that resolves Holliday junction intermediates in genetic recombination. Cleaves mobile four-strand junctions by introducing symmetrical nicks in paired strands. Promotes annealing of linear ssDNA with homologous dsDNA. Required for DNA repair, homologous recombination and chromosome segregation. In Bacillus cereus (strain ZK / E33L), this protein is Holliday junction resolvase RecU.